The chain runs to 362 residues: Mannose-1-phosphate guanyltransferase (362 aa).

The protein belongs to the transferase hexapeptide repeat family.

It is found in the cytoplasm. The catalysed reaction is alpha-D-mannose 1-phosphate + GTP + H(+) = GDP-alpha-D-mannose + diphosphate. It participates in nucleotide-sugar biosynthesis; GDP-alpha-D-mannose biosynthesis; GDP-alpha-D-mannose from alpha-D-mannose 1-phosphate (GTP route): step 1/1. In terms of biological role, involved in cell wall synthesis where it is required for glycosylation. Involved in cell cycle progression through cell-size checkpoint. This is Mannose-1-phosphate guanyltransferase (MPG1) from Debaryomyces hansenii (strain ATCC 36239 / CBS 767 / BCRC 21394 / JCM 1990 / NBRC 0083 / IGC 2968) (Yeast).